We begin with the raw amino-acid sequence, 199 residues long: Adenylyl-sulfate kinase (199 aa).

ATP is bound at residue glycine 35–serine 42. Residue serine 109 is the Phosphoserine intermediate of the active site.

It belongs to the APS kinase family.

The catalysed reaction is adenosine 5'-phosphosulfate + ATP = 3'-phosphoadenylyl sulfate + ADP + H(+). Its pathway is sulfur metabolism; hydrogen sulfide biosynthesis; sulfite from sulfate: step 2/3. In terms of biological role, catalyzes the synthesis of activated sulfate. This chain is Adenylyl-sulfate kinase, found in Clostridium kluyveri (strain ATCC 8527 / DSM 555 / NBRC 12016 / NCIMB 10680 / K1).